A 218-amino-acid polypeptide reads, in one-letter code: Adenylate kinase (218 aa).

10-15 (GAGKGT) lines the ATP pocket. Positions 30–59 (STGDMLRAAVKAGTPLGQQAKAVMDAGKLV) are NMP. AMP contacts are provided by residues T31, R36, 57 to 59 (KLV), 85 to 88 (GFPR), and Q92. Residues 122 to 159 (GRRSHPASGRTYHVKFNPPKVEGKDDVTGEDLIQREDD) are LID. ATP is bound by residues R123 and 132–133 (TY). The disordered stretch occupies residues 127–147 (PASGRTYHVKFNPPKVEGKDD). Positions 156 and 167 each coordinate AMP. G203 lines the ATP pocket.

This sequence belongs to the adenylate kinase family. As to quaternary structure, monomer.

The protein localises to the cytoplasm. It catalyses the reaction AMP + ATP = 2 ADP. It participates in purine metabolism; AMP biosynthesis via salvage pathway; AMP from ADP: step 1/1. In terms of biological role, catalyzes the reversible transfer of the terminal phosphate group between ATP and AMP. Plays an important role in cellular energy homeostasis and in adenine nucleotide metabolism. In Paracidovorax citrulli (strain AAC00-1) (Acidovorax citrulli), this protein is Adenylate kinase.